Consider the following 136-residue polypeptide: Nucleoside diphosphate kinase (136 aa).

Residues K10, F58, R86, T92, R104, and N114 each coordinate ATP. The Pros-phosphohistidine intermediate role is filled by H117.

It belongs to the NDK family. Homotetramer. It depends on Mg(2+) as a cofactor.

The protein localises to the cytoplasm. The catalysed reaction is a 2'-deoxyribonucleoside 5'-diphosphate + ATP = a 2'-deoxyribonucleoside 5'-triphosphate + ADP. The enzyme catalyses a ribonucleoside 5'-diphosphate + ATP = a ribonucleoside 5'-triphosphate + ADP. Functionally, major role in the synthesis of nucleoside triphosphates other than ATP. The ATP gamma phosphate is transferred to the NDP beta phosphate via a ping-pong mechanism, using a phosphorylated active-site intermediate. This chain is Nucleoside diphosphate kinase, found in Mycobacterium marinum (strain ATCC BAA-535 / M).